The chain runs to 460 residues: Diguanylate cyclase DosC (460 aa).

Residue H98 participates in heme binding. A GGDEF domain is found at 325–458 (TPLSVLIIDV…GRNRVELWKA (134 aa)). D333 serves as a coordination point for Mg(2+). Substrate is bound by residues N341 and D350. D376 is a binding site for Mg(2+). The Proton acceptor role is filled by D376.

Heme serves as cofactor. Requires Mg(2+) as cofactor.

The catalysed reaction is 2 GTP = 3',3'-c-di-GMP + 2 diphosphate. It functions in the pathway purine metabolism; 3',5'-cyclic di-GMP biosynthesis. In terms of biological role, globin-coupled heme-based oxygen sensor protein displaying diguanylate cyclase (DGC) activity in response to oxygen availability. Thus, catalyzes the synthesis of cyclic diguanylate (c-di-GMP) via the condensation of 2 GTP molecules. Cyclic-di-GMP is a second messenger which controls cell surface-associated traits in bacteria. This chain is Diguanylate cyclase DosC (dosC), found in Escherichia coli O157:H7.